A 357-amino-acid chain; its full sequence is Spore coat protein I (357 aa).

Belongs to the CotS family.

Its subcellular location is the spore coat. The chain is Spore coat protein I (cotI) from Bacillus subtilis (strain 168).